The sequence spans 156 residues: ATP synthase subunit b (156 aa).

The helical transmembrane segment at 7–27 (LIAQFVVFFILAGFTMKFVWP) threads the bilayer.

Belongs to the ATPase B chain family. In terms of assembly, F-type ATPases have 2 components, F(1) - the catalytic core - and F(0) - the membrane proton channel. F(1) has five subunits: alpha(3), beta(3), gamma(1), delta(1), epsilon(1). F(0) has three main subunits: a(1), b(2) and c(10-14). The alpha and beta chains form an alternating ring which encloses part of the gamma chain. F(1) is attached to F(0) by a central stalk formed by the gamma and epsilon chains, while a peripheral stalk is formed by the delta and b chains.

The protein resides in the cell inner membrane. F(1)F(0) ATP synthase produces ATP from ADP in the presence of a proton or sodium gradient. F-type ATPases consist of two structural domains, F(1) containing the extramembraneous catalytic core and F(0) containing the membrane proton channel, linked together by a central stalk and a peripheral stalk. During catalysis, ATP synthesis in the catalytic domain of F(1) is coupled via a rotary mechanism of the central stalk subunits to proton translocation. Its function is as follows. Component of the F(0) channel, it forms part of the peripheral stalk, linking F(1) to F(0). This is ATP synthase subunit b from Herminiimonas arsenicoxydans.